The sequence spans 245 residues: 4-hydroxy-tetrahydrodipicolinate reductase (245 aa).

Residues 7–12, 75–77, and 102–105 contribute to the NAD(+) site; these read GARGKV, GTT, and APNF. The active-site Proton donor/acceptor is histidine 132. Position 133 (histidine 133) interacts with (S)-2,3,4,5-tetrahydrodipicolinate. Catalysis depends on lysine 136, which acts as the Proton donor. Residue 142 to 143 coordinates (S)-2,3,4,5-tetrahydrodipicolinate; that stretch reads GT.

The protein belongs to the DapB family.

Its subcellular location is the cytoplasm. It catalyses the reaction (S)-2,3,4,5-tetrahydrodipicolinate + NAD(+) + H2O = (2S,4S)-4-hydroxy-2,3,4,5-tetrahydrodipicolinate + NADH + H(+). The enzyme catalyses (S)-2,3,4,5-tetrahydrodipicolinate + NADP(+) + H2O = (2S,4S)-4-hydroxy-2,3,4,5-tetrahydrodipicolinate + NADPH + H(+). It participates in amino-acid biosynthesis; L-lysine biosynthesis via DAP pathway; (S)-tetrahydrodipicolinate from L-aspartate: step 4/4. In terms of biological role, catalyzes the conversion of 4-hydroxy-tetrahydrodipicolinate (HTPA) to tetrahydrodipicolinate. The sequence is that of 4-hydroxy-tetrahydrodipicolinate reductase from Mycolicibacterium vanbaalenii (strain DSM 7251 / JCM 13017 / BCRC 16820 / KCTC 9966 / NRRL B-24157 / PYR-1) (Mycobacterium vanbaalenii).